Here is a 161-residue protein sequence, read N- to C-terminus: Cyclic pyranopterin monophosphate synthase (161 aa).

Residues 75–77 and 115–116 each bind substrate; these read MCH and ME. Aspartate 130 is an active-site residue.

Belongs to the MoaC family. As to quaternary structure, homohexamer; trimer of dimers.

It catalyses the reaction (8S)-3',8-cyclo-7,8-dihydroguanosine 5'-triphosphate = cyclic pyranopterin phosphate + diphosphate. The protein operates within cofactor biosynthesis; molybdopterin biosynthesis. Its function is as follows. Catalyzes the conversion of (8S)-3',8-cyclo-7,8-dihydroguanosine 5'-triphosphate to cyclic pyranopterin monophosphate (cPMP). The protein is Cyclic pyranopterin monophosphate synthase of Bacillus cereus (strain ATCC 10987 / NRS 248).